The following is a 145-amino-acid chain: uncharacterized protein (145 aa).

A run of 3 helical transmembrane segments spans residues 3–23, 83–103, and 105–125; these read VGII…GIGG, YVID…YLVP, and LSLL…MLWI.

The protein resides in the cell membrane. This is an uncharacterized protein from Methanocaldococcus jannaschii (strain ATCC 43067 / DSM 2661 / JAL-1 / JCM 10045 / NBRC 100440) (Methanococcus jannaschii).